Reading from the N-terminus, the 502-residue chain is uncharacterized protein (502 aa).

3 stretches are compositionally biased toward low complexity: residues 1–10, 28–47, and 155–171; these read MQSTTNNNTN, SNRS…NNLS, and NTED…SVNS. 4 disordered regions span residues 1–57, 155–181, 212–362, and 438–487; these read MQST…VISY, NTED…LSAR, SLGN…TDKF, and TIDQ…TSNL. Over residues 212–230 the composition is skewed to polar residues; the sequence is SLGNSERNSPDRPSTQGDS. Low complexity-rich tracts occupy residues 242 to 290 and 309 to 327; these read RNAS…SSRN and SNKN…TSIK. The span at 339–348 shows a compositional bias: polar residues; sequence QTNKSKNQRG. The segment covering 446–460 has biased composition (low complexity); that stretch reads TSDKNNSTKSNTKYN. Polar residues predominate over residues 470–487; it reads SYGTSKRSHNRSSNTSNL.

It localises to the virion. This is an uncharacterized protein from Acanthamoeba polyphaga (Amoeba).